Consider the following 200-residue polypeptide: UPF0637 protein LCK_01372 (200 aa).

Belongs to the UPF0637 family.

The chain is UPF0637 protein LCK_01372 from Leuconostoc citreum (strain KM20).